Reading from the N-terminus, the 409-residue chain is Putative competence-damage inducible protein (409 aa).

This sequence belongs to the CinA family.

In Clostridium botulinum (strain ATCC 19397 / Type A), this protein is Putative competence-damage inducible protein.